The chain runs to 233 residues: Delta-actitoxin-Amc1a (233 aa).

A signal peptide spans 1-18; that stretch reads MKRIFIVALLFATCLVNA. Propeptides lie at residues 19 to 29 and 30 to 33; these read KPSINDADIKR and EPEP. Residue Pro-39 is modified to Hydroxyproline. 2 disulfides stabilise this stretch: Cys-40–Cys-51 and Cys-43–Cys-58. 2 consecutive propeptides follow at residues 61–63 and 64–67; these read RKR and EPEP. Pro-73 carries the hydroxyproline modification. Intrachain disulfides connect Cys-74–Cys-85 and Cys-77–Cys-92. Propeptides lie at residues 95–97 and 98–101; these read RKR and EPEP. Residue Pro-107 is modified to Hydroxyproline. Intrachain disulfides connect Cys-108–Cys-119 and Cys-111–Cys-126. 2 consecutive propeptides follow at residues 129–131 and 132–135; these read RKR and EPEP. At Pro-141 the chain carries Hydroxyproline. 2 disulfide bridges follow: Cys-142–Cys-153 and Cys-145–Cys-160. 2 consecutive propeptides follow at residues 163-165 and 166-169; these read RKR and EPEP. Residue Pro-175 is modified to Hydroxyproline. 2 disulfides stabilise this stretch: Cys-176/Cys-187 and Cys-179/Cys-194. 2 consecutive propeptides follow at residues 197–199 and 200–203; these read RKR and EPEP. Position 209 is a hydroxyproline (Pro-209). 2 cysteine pairs are disulfide-bonded: Cys-210–Cys-221 and Cys-213–Cys-228. The propeptide occupies 231 to 233; that stretch reads RKR.

The protein belongs to the sea anemone BBH family. In terms of processing, each Am I peptide may contain 2 disulfide bonds. Post-translationally, the precursor protein seems to be processed in the following sequence: release of the signal peptide and of the propeptide, production of six identical 34-residue peptides by cleavage between Arg and Glu, release of four N-terminal and three C-terminal residues from each peptide and hydroxylation of each Pro in position 6 of the resulting 27-residue peptides.

It localises to the secreted. It is found in the nematocyst. In terms of biological role, may inhibit voltage-gated sodium channels (Nav). The chain is Delta-actitoxin-Amc1a from Antheopsis maculata (Sea anemone).